A 266-amino-acid polypeptide reads, in one-letter code: MWYSTVRNPSIALIKQGYHILAEYNLVKEELKNIYAIPSYACGLHWFGVIFVHSGIYAGSVFRFSILLPENFPADISLPTVVFSTEVLHPHICPQNKTLDLAHFLNEWRKDEHHIWHVLRYIQAIFADPEGSICTGQSSSGDLVIMDEVRNMNALNMLAKSRPEYIKRVQEQAILSRNLIYDRPPTEDPHYIIVEPYCAERHLKFMDQLKSPCWKEATSMDCSQPSEYLGHIDSSRQLDEEEANQVEKLHRGRIPEHQREESEVSL.

A UBC core domain is found at lysine 15–asparagine 178. Residues serine 234 to leucine 266 form a disordered region. Residues glutamine 245–leucine 266 show a composition bias toward basic and acidic residues.

It belongs to the ubiquitin-conjugating enzyme family. FTS subfamily.

This Drosophila melanogaster (Fruit fly) protein is Protein crossbronx-like.